The chain runs to 160 residues: S-ribosylhomocysteine lyase (160 aa).

Positions 57, 61, and 127 each coordinate Fe cation.

Belongs to the LuxS family. As to quaternary structure, homodimer. Fe cation is required as a cofactor.

It catalyses the reaction S-(5-deoxy-D-ribos-5-yl)-L-homocysteine = (S)-4,5-dihydroxypentane-2,3-dione + L-homocysteine. Functionally, involved in the synthesis of autoinducer 2 (AI-2) which is secreted by bacteria and is used to communicate both the cell density and the metabolic potential of the environment. The regulation of gene expression in response to changes in cell density is called quorum sensing. Catalyzes the transformation of S-ribosylhomocysteine (RHC) to homocysteine (HC) and 4,5-dihydroxy-2,3-pentadione (DPD). The protein is S-ribosylhomocysteine lyase of Streptococcus uberis (strain ATCC BAA-854 / 0140J).